Reading from the N-terminus, the 407-residue chain is Putative metabolite transport protein HI_1104 (407 aa).

Residues Met1 to Ser16 are Cytoplasmic-facing. A helical transmembrane segment spans residues Ala17–Ile37. Residues Ser38–Gly48 are Periplasmic-facing. Residues Gly49 to Leu69 form a helical membrane-spanning segment. Residues Ser70 to Arg77 lie on the Cytoplasmic side of the membrane. Residues Val78–Gly98 traverse the membrane as a helical segment. The Periplasmic segment spans residues Tyr99–Thr107. A helical membrane pass occupies residues Ile108–Trp128. The Cytoplasmic portion of the chain corresponds to Pro129–Ser138. Residues Tyr139–Leu159 form a helical membrane-spanning segment. Pro160 is a topological domain (periplasmic). A helical membrane pass occupies residues His161–Leu181. Residues Arg182 to Ser224 are Cytoplasmic-facing. A helical transmembrane segment spans residues Leu225–Leu245. The Periplasmic portion of the chain corresponds to Pro246–Gly261. The helical transmembrane segment at Leu262–Ala282 threads the bilayer. Topologically, residues Asp283–Lys288 are cytoplasmic. A helical transmembrane segment spans residues Pro289–Thr309. At Asp310–Asp312 the chain is on the periplasmic side. Residues Ile313 to Gly333 traverse the membrane as a helical segment. Residues Ala334 to Arg357 lie on the Cytoplasmic side of the membrane. Helical transmembrane passes span Ala358–Thr378 and Ala379–Pro399. Residues Glu400–Asp407 are Cytoplasmic-facing.

Belongs to the major facilitator superfamily. Aromatic acid:H(+) symporter (AAHS) (TC 2.A.1.15) family.

It localises to the cell inner membrane. The polypeptide is Putative metabolite transport protein HI_1104 (Haemophilus influenzae (strain ATCC 51907 / DSM 11121 / KW20 / Rd)).